A 31-amino-acid polypeptide reads, in one-letter code: Cyclotide cter-J (31 aa).

Residues 1–31 (GTVPCGESCVFIPCITGIAGCSCKNKVCYID) constitute a cross-link (cyclopeptide (Gly-Asp)). 3 disulfides stabilise this stretch: Cys5-Cys21, Cys9-Cys23, and Cys14-Cys28.

In terms of processing, contains 3 disulfide bonds. This is a cyclic peptide.

Its function is as follows. Probably participates in a plant defense mechanism. The sequence is that of Cyclotide cter-J from Clitoria ternatea (Butterfly pea).